The following is a 278-amino-acid chain: MKTTKDFWVMKNEGKKIVMITAYDYPSAKQAEQAGADIILVGDSLGNVVLGYDSTVYVTMEDMIHHGKAAKRGAPNTFIVADMPFMSCHLSIRDTLLNGARLIQETGAQAVKVEGADEMIPHIRALVRAGIPVVSHLGLTPQTAAVLGGFKVRGKDGEAARKMLEDVKECQEAGAFALVLECIPKQLAQEISTNLTIPTIGIGAGVHTDGQVLVYHDILTYGVNRAPKFVKAYANADQLMLKGLQDYADEVRSMNFPDDEHSFTMKEEELKTLYGGRG.

Mg(2+)-binding residues include Asp-43 and Asp-82. Residues 43 to 44, Asp-82, and Lys-112 contribute to the 3-methyl-2-oxobutanoate site; that span reads DS. Glu-114 serves as a coordination point for Mg(2+). Glu-181 (proton acceptor) is an active-site residue.

The protein belongs to the PanB family. In terms of assembly, homodecamer; pentamer of dimers. Mg(2+) is required as a cofactor.

The protein localises to the cytoplasm. It catalyses the reaction 3-methyl-2-oxobutanoate + (6R)-5,10-methylene-5,6,7,8-tetrahydrofolate + H2O = 2-dehydropantoate + (6S)-5,6,7,8-tetrahydrofolate. It participates in cofactor biosynthesis; (R)-pantothenate biosynthesis; (R)-pantoate from 3-methyl-2-oxobutanoate: step 1/2. Catalyzes the reversible reaction in which hydroxymethyl group from 5,10-methylenetetrahydrofolate is transferred onto alpha-ketoisovalerate to form ketopantoate. The polypeptide is 3-methyl-2-oxobutanoate hydroxymethyltransferase (Desulfitobacterium hafniense (strain Y51)).